The following is a 626-amino-acid chain: Polygalacturonase 1 beta-like protein 3 (626 aa).

Positions 1–23 (MLKQFLLLQSFSFFLFNVVIVGG) are cleaved as a signal peptide. Residues 117-120 (FSVY) form an FXXY 1 repeat. An N-linked (GlcNAc...) asparagine glycan is attached at N124. 11 FXXY repeats span residues 125-128 (FTNY), 139-142 (FKNY), 153-156 (FRRY), 167-170 (FTVY), 181-184 (FNSY), 195-198 (FTNY), 209-212 (FTAY), 223-226 (FKTY), 238-241 (FTSY), 252-255 (FTSY), and 266-269 (FSNY). N141 carries an N-linked (GlcNAc...) asparagine glycan. A glycan (N-linked (GlcNAc...) asparagine) is linked at N277. 7 FXXY repeats span residues 280–283 (FTSY), 294–297 (FNNY), 308–311 (FANY), 322–325 (FSSY), 336–339 (FVNY), 350–353 (FTGY), and 364–367 (FKTY). An N-linked (GlcNAc...) asparagine glycan is attached at N370. FXXY repeat units follow at residues 373–376 (FKDY) and 383–386 (FAKY). N387 and N465 each carry an N-linked (GlcNAc...) asparagine glycan. The BURP domain maps to 411-625 (FFRESSLKEG…FENDMNWAIA (215 aa)).

Expressed in flowers and stems. Detected in trichomes, guard cells, root vascular tissue, root hairs, pollen sacs, sepals and styles of pistils.

It localises to the secreted. The protein localises to the extracellular space. It is found in the apoplast. Its subcellular location is the cell wall. Involved in cell size determination. May serve as a chaperone for expansins through the secretory pathway. The chain is Polygalacturonase 1 beta-like protein 3 from Arabidopsis thaliana (Mouse-ear cress).